The chain runs to 326 residues: Vitamin B12 import system permease protein BtuC (326 aa).

Helical transmembrane passes span 15 to 35 (WLLS…CAGE), 61 to 81 (LAVL…QALF), 88 to 108 (PGLL…VLLG), 112 to 132 (LPGW…TLIL), 146 to 166 (LLAG…AIYF), 184 to 204 (GGVD…LIWI), 240 to 260 (GWMV…GLVI), 274 to 294 (VLLP…DVVA), and 302 to 322 (ELPI…WLLL).

The protein belongs to the binding-protein-dependent transport system permease family. FecCD subfamily. The complex is composed of two ATP-binding proteins (BtuD), two transmembrane proteins (BtuC) and a solute-binding protein (BtuF).

It localises to the cell inner membrane. Part of the ABC transporter complex BtuCDF involved in vitamin B12 import. Involved in the translocation of the substrate across the membrane. The polypeptide is Vitamin B12 import system permease protein BtuC (Salmonella enteritidis PT4 (strain P125109)).